The chain runs to 322 residues: Cytochrome f (322 aa).

Residues 1 to 36 form the signal peptide; the sequence is MQKNRNTFSWVKEQMTRCISVSMMIYVITRASISNA. The heme site is built by Tyr37, Cys57, Cys60, and His61. Residues 288–308 traverse the membrane as a helical segment; that stretch reads IQGLLFFLASVILAQIFLVLK.

Belongs to the cytochrome f family. The 4 large subunits of the cytochrome b6-f complex are cytochrome b6, subunit IV (17 kDa polypeptide, petD), cytochrome f and the Rieske protein, while the 4 small subunits are PetG, PetL, PetM and PetN. The complex functions as a dimer. Requires heme as cofactor.

It localises to the plastid. The protein localises to the chloroplast thylakoid membrane. Component of the cytochrome b6-f complex, which mediates electron transfer between photosystem II (PSII) and photosystem I (PSI), cyclic electron flow around PSI, and state transitions. The chain is Cytochrome f from Nymphaea alba (White water-lily).